Consider the following 205-residue polypeptide: High frequency lysogenization protein HflD homolog (205 aa).

It belongs to the HflD family.

It is found in the cytoplasm. Its subcellular location is the cell inner membrane. The sequence is that of High frequency lysogenization protein HflD homolog from Hahella chejuensis (strain KCTC 2396).